The sequence spans 221 residues: Zingipain-1 (221 aa).

3 disulfide bridges follow: Cys24–Cys65, Cys58–Cys98, and Cys155–Cys206. Cys27 is a catalytic residue. 2 N-linked (GlcNAc...) asparagine glycosylation sites follow: Asn95 and Asn156. Active-site residues include His161 and Asn181.

It belongs to the peptidase C1 family.

The enzyme catalyses Preferential cleavage of peptides with a proline residue at the P2 position.. In terms of biological role, cysteine proteinase with a high level of diversity in substrate specificity, an amino acid bearing a proline residue at the P2 position is preferred. The sequence is that of Zingipain-1 from Zingiber officinale (Ginger).